A 201-amino-acid chain; its full sequence is Recombination protein RecR (201 aa).

The segment at 60 to 75 (CKRCGSYAETEICEIC) adopts a C4-type zinc-finger fold. Positions 83–178 (HTFCVVEQPE…NVTRIAYGIT (96 aa)) constitute a Toprim domain.

Belongs to the RecR family.

May play a role in DNA repair. It seems to be involved in an RecBC-independent recombinational process of DNA repair. It may act with RecF and RecO. This Leptospira interrogans serogroup Icterohaemorrhagiae serovar copenhageni (strain Fiocruz L1-130) protein is Recombination protein RecR.